The following is a 364-amino-acid chain: Pre-mRNA-splicing factor SLT11 (364 aa).

Residues 331–364 (KSTDNAKNDKKKTSKKVHKDRSKKSKPRANKLTI) form a disordered region. Basic residues predominate over residues 339–364 (DKKKTSKKVHKDRSKKSKPRANKLTI).

This sequence belongs to the SLT11 family. As to quaternary structure, belongs to the CWC complex (or CEF1-associated complex), a spliceosome subcomplex composed of the U2, U5 and U6 snRNAs and at least BUD13, BUD31, BRR2, CDC40, CEF1, CLF1, CUS1, CWC2, CWC15, CWC21, CWC22, CWC23, CWC24, CWC25, CWC27, ECM2, HSH155, IST3, ISY1, LEA1, MSL1, NTC20, PRP8, PRP9, PRP11, PRP19, PRP21, PRP22, PRP45, PRP46, SLU7, SMB1, SMD1, SMD2, SMD3, SMX2, SMX3, SNT309, SNU114, SPP2, SYF1, SYF2, RSE1 and YJU2. Interacts with SLU7.

The protein resides in the nucleus. Its function is as follows. Involved in pre-mRNA splicing. Facilitates the cooperative formation of U2/U6 helix II in association with stem II in the spliceosome. Binds to RNA. In Saccharomyces cerevisiae (strain ATCC 204508 / S288c) (Baker's yeast), this protein is Pre-mRNA-splicing factor SLT11 (ECM2).